Here is a 482-residue protein sequence, read N- to C-terminus: Long chain base biosynthesis protein 1 (482 aa).

Residues 32–52 (VPIRGHFFVEGLLGVVIIILL) traverse the membrane as a helical segment.

This sequence belongs to the class-II pyridoxal-phosphate-dependent aminotransferase family. As to quaternary structure, heterodimer with LCB2 (LCB2a or LCB2b). Component of the serine palmitoyltransferase (SPT) complex, composed of LCB1 and LCB2 (LCB2a or LCB2b). It depends on pyridoxal 5'-phosphate as a cofactor. Ubiquitous.

It is found in the endoplasmic reticulum membrane. It carries out the reaction L-serine + hexadecanoyl-CoA + H(+) = 3-oxosphinganine + CO2 + CoA. It participates in lipid metabolism; sphingolipid metabolism. Functionally, component of serine palmitoyltransferase (SPT), which catalyzes the committed step in the synthesis of sphingolipids, the condensation of serine with palmitoyl CoA to form the long chain base 3-ketosphinganine. The heterodimer formed with LCB2 constitutes the catalytic core. Involved in the regulation of the programmed cell death (PCD) signaling pathway. Plays an important role during male gametogenesis and embryogenesis. The chain is Long chain base biosynthesis protein 1 (LCB1) from Arabidopsis thaliana (Mouse-ear cress).